We begin with the raw amino-acid sequence, 91 residues long: DNA-directed RNA polymerase subunit omega (91 aa).

A disordered region spans residues 66 to 91; that stretch reads QMPPPLPNFPGAANREATGAEDAAGE.

This sequence belongs to the RNA polymerase subunit omega family. As to quaternary structure, the RNAP catalytic core consists of 2 alpha, 1 beta, 1 beta' and 1 omega subunit. When a sigma factor is associated with the core the holoenzyme is formed, which can initiate transcription.

The enzyme catalyses RNA(n) + a ribonucleoside 5'-triphosphate = RNA(n+1) + diphosphate. Functionally, promotes RNA polymerase assembly. Latches the N- and C-terminal regions of the beta' subunit thereby facilitating its interaction with the beta and alpha subunits. The polypeptide is DNA-directed RNA polymerase subunit omega (Acidithiobacillus ferrooxidans (strain ATCC 23270 / DSM 14882 / CIP 104768 / NCIMB 8455) (Ferrobacillus ferrooxidans (strain ATCC 23270))).